A 294-amino-acid chain; its full sequence is Foldase protein PrsA 1 (294 aa).

The first 21 residues, 1 to 21, serve as a signal peptide directing secretion; it reads MTKLKKVMISVIAATLLLLAG. The N-palmitoyl cysteine moiety is linked to residue Cys22. Cys22 carries S-diacylglycerol cysteine lipidation. The 92-residue stretch at 135-226 folds into the PpiC domain; the sequence is EPDITVRHIL…YGYHLIQLVK (92 aa).

Belongs to the PrsA family.

The protein localises to the cell membrane. The catalysed reaction is [protein]-peptidylproline (omega=180) = [protein]-peptidylproline (omega=0). Plays a major role in protein secretion by helping the post-translocational extracellular folding of several secreted proteins. In Listeria monocytogenes serovar 1/2a (strain ATCC BAA-679 / EGD-e), this protein is Foldase protein PrsA 1 (prsA1).